The following is a 435-amino-acid chain: 5-methylthioadenosine/S-adenosylhomocysteine deaminase (435 aa).

Zn(2+)-binding residues include His-65 and His-67. Residues Glu-94, Arg-150, and His-189 each contribute to the substrate site. Position 216 (His-216) interacts with Zn(2+). 2 residues coordinate substrate: Glu-219 and Asp-304. Position 304 (Asp-304) interacts with Zn(2+).

This sequence belongs to the metallo-dependent hydrolases superfamily. MTA/SAH deaminase family. The cofactor is Zn(2+).

It carries out the reaction S-adenosyl-L-homocysteine + H2O + H(+) = S-inosyl-L-homocysteine + NH4(+). It catalyses the reaction S-methyl-5'-thioadenosine + H2O + H(+) = S-methyl-5'-thioinosine + NH4(+). Its function is as follows. Catalyzes the deamination of 5-methylthioadenosine and S-adenosyl-L-homocysteine into 5-methylthioinosine and S-inosyl-L-homocysteine, respectively. Is also able to deaminate adenosine. The chain is 5-methylthioadenosine/S-adenosylhomocysteine deaminase from Bacillus cytotoxicus (strain DSM 22905 / CIP 110041 / 391-98 / NVH 391-98).